Consider the following 350-residue polypeptide: Methionine import ATP-binding protein MetN (350 aa).

In terms of domain architecture, ABC transporter spans 9-245 (LKDVDVEFHG…PQQQLTKDFI (237 aa)). ATP is bound at residue 43 to 50 (GYSGAGKS).

The protein belongs to the ABC transporter superfamily. Methionine importer (TC 3.A.1.24) family. As to quaternary structure, the complex is composed of two ATP-binding proteins (MetN), two transmembrane proteins (MetI) and a solute-binding protein (MetQ).

It localises to the cell membrane. It carries out the reaction L-methionine(out) + ATP + H2O = L-methionine(in) + ADP + phosphate + H(+). The enzyme catalyses D-methionine(out) + ATP + H2O = D-methionine(in) + ADP + phosphate + H(+). In terms of biological role, part of the ABC transporter complex MetNIQ involved in methionine import. Responsible for energy coupling to the transport system. The sequence is that of Methionine import ATP-binding protein MetN from Lacticaseibacillus paracasei (strain ATCC 334 / BCRC 17002 / CCUG 31169 / CIP 107868 / KCTC 3260 / NRRL B-441) (Lactobacillus paracasei).